Here is a 168-residue protein sequence, read N- to C-terminus: MKKITTGVLILAIAIVVLIFQYINGDGPFKKSSTDVRGESYLVKRVIDGDTIIIDKDGQDERVRLIGVDTPETVKPNTPVQPYGKAASNFTKKHLTNQRVRLEYDREPKDKYGRTLAYVWLGDEMFNVKLAKEGLARAKFYPPNDKYRILIEQAQKEAQKKQLNIWER.

Residues 1 to 27 (MKKITTGVLILAIAIVVLIFQYINGDG) form the signal peptide. Active-site residues include arginine 64, glutamate 72, and arginine 114.

Belongs to the thermonuclease family. Ca(2+) serves as cofactor.

The protein localises to the secreted. The enzyme catalyses Endonucleolytic cleavage to nucleoside 3'-phosphates and 3'-phosphooligonucleotide end-products.. Its function is as follows. Enzyme that catalyzes the hydrolysis of both DNA and RNA at the 5'-position of the phosphodiester bond. This chain is Thermonuclease (nucI), found in Staphylococcus intermedius.